A 368-amino-acid chain; its full sequence is Ferredoxin--NADP reductase (368 aa).

7 residues coordinate FAD: D56, Q64, Y69, V109, F144, D310, and T351.

The protein belongs to the ferredoxin--NADP reductase type 2 family. Homodimer. FAD is required as a cofactor.

It catalyses the reaction 2 reduced [2Fe-2S]-[ferredoxin] + NADP(+) + H(+) = 2 oxidized [2Fe-2S]-[ferredoxin] + NADPH. In Leptothrix cholodnii (strain ATCC 51168 / LMG 8142 / SP-6) (Leptothrix discophora (strain SP-6)), this protein is Ferredoxin--NADP reductase.